The primary structure comprises 490 residues: Aspartyl/glutamyl-tRNA(Asn/Gln) amidotransferase subunit B (490 aa).

This sequence belongs to the GatB/GatE family. GatB subfamily. As to quaternary structure, heterotrimer of A, B and C subunits.

It catalyses the reaction L-glutamyl-tRNA(Gln) + L-glutamine + ATP + H2O = L-glutaminyl-tRNA(Gln) + L-glutamate + ADP + phosphate + H(+). It carries out the reaction L-aspartyl-tRNA(Asn) + L-glutamine + ATP + H2O = L-asparaginyl-tRNA(Asn) + L-glutamate + ADP + phosphate + 2 H(+). Its function is as follows. Allows the formation of correctly charged Asn-tRNA(Asn) or Gln-tRNA(Gln) through the transamidation of misacylated Asp-tRNA(Asn) or Glu-tRNA(Gln) in organisms which lack either or both of asparaginyl-tRNA or glutaminyl-tRNA synthetases. The reaction takes place in the presence of glutamine and ATP through an activated phospho-Asp-tRNA(Asn) or phospho-Glu-tRNA(Gln). The chain is Aspartyl/glutamyl-tRNA(Asn/Gln) amidotransferase subunit B from Methylorubrum extorquens (strain CM4 / NCIMB 13688) (Methylobacterium extorquens).